Consider the following 157-residue polypeptide: Probable cyclic pyranopterin monophosphate synthase (157 aa).

Substrate is bound by residues 75–77 (MCH) and 111–112 (ME). The active site involves aspartate 126.

It belongs to the MoaC family. Homohexamer; trimer of dimers.

The catalysed reaction is (8S)-3',8-cyclo-7,8-dihydroguanosine 5'-triphosphate = cyclic pyranopterin phosphate + diphosphate. The protein operates within cofactor biosynthesis; molybdopterin biosynthesis. Catalyzes the conversion of (8S)-3',8-cyclo-7,8-dihydroguanosine 5'-triphosphate to cyclic pyranopterin monophosphate (cPMP). This is Probable cyclic pyranopterin monophosphate synthase from Methanosarcina mazei (strain ATCC BAA-159 / DSM 3647 / Goe1 / Go1 / JCM 11833 / OCM 88) (Methanosarcina frisia).